A 545-amino-acid polypeptide reads, in one-letter code: Membrane protein insertase YidC (545 aa).

A helical transmembrane segment spans residues 6-26; the sequence is NLLLIALLFVSFMIWQAWQTD. Residues 31-54 are disordered; the sequence is PVAQTTQQTSNPATGDAASSAVPA. Helical transmembrane passes span 342-362, 417-437, 455-475, and 496-516; these read KFIHGFIGNWGFSIIIITFIV, LGGCLPLVIQMPIFLALYYML, LSAQDPYYILPILMGVTMFFI, and PVIFTVFFLWFPSGLVLYYIV.

It belongs to the OXA1/ALB3/YidC family. Type 1 subfamily. In terms of assembly, interacts with the Sec translocase complex via SecD. Specifically interacts with transmembrane segments of nascent integral membrane proteins during membrane integration.

The protein resides in the cell inner membrane. Its function is as follows. Required for the insertion and/or proper folding and/or complex formation of integral membrane proteins into the membrane. Involved in integration of membrane proteins that insert both dependently and independently of the Sec translocase complex, as well as at least some lipoproteins. Aids folding of multispanning membrane proteins. The protein is Membrane protein insertase YidC of Serratia proteamaculans (strain 568).